The following is a 30-amino-acid chain: Antifungal protein Lap (30 aa).

Its function is as follows. Displays antifungal activity against M.arachidicola and P.piricola, but not against R.solani, C.gossypii and C.comatus. Inhibits mycelial growth in P.piricola with an IC(50) of 70 nM. Displays very low cell-free translation inhibitory activity in a rabbit reticulocyte lysate system (IC(50)=70 uM) but is able to inhibit HIV-1 reverse transcriptase activity (IC(50)=5.2 nM). This Lyophyllum shimeji (Hon-shimeji) protein is Antifungal protein Lap.